Here is a 192-residue protein sequence, read N- to C-terminus: MSKPSDRINLTNQFLIAMPNMADPTFSGTVVYLCDHSERGALGLVINRPTDIDLESLFNRIDLKLDIEPLLHIPVYFGGPVQTERGFVLHEPVEGASYNSSMSVEGGLEMTTSKDVLEAVATGTGPKRFLLTLGHAGWGAGQLEEEISRNGWLTVAADPRIVFDTPAEERFEAALGLLGVSSSMLSGEAGHA.

Belongs to the UPF0301 (AlgH) family.

The polypeptide is UPF0301 protein Bcep18194_A3962 (Burkholderia lata (strain ATCC 17760 / DSM 23089 / LMG 22485 / NCIMB 9086 / R18194 / 383)).